Consider the following 159-residue polypeptide: Probable GPI-anchored protein ANS1 (159 aa).

An N-terminal signal peptide occupies residues 1–20; the sequence is MKCTLVSTLFAITNILVAHA. The stretch at 101–114 is one PIR1/2/3 repeat; that stretch reads AAISQISDGQIQAT. G137 carries GPI-anchor amidated glycine lipidation. The propeptide at 138-159 is removed in mature form; the sequence is AGMKVESKNMGYIVGVAALLFL.

It localises to the cell membrane. This Saccharomyces cerevisiae (strain ATCC 204508 / S288c) (Baker's yeast) protein is Probable GPI-anchored protein ANS1 (ANS1).